The following is a 229-amino-acid chain: Lantibiotic transport ATP-binding protein SrtF (229 aa).

In terms of domain architecture, ABC transporter spans 2–225; the sequence is LKIQNLKKSY…EELFNNQILF (224 aa). Position 34–41 (34–41) interacts with ATP; sequence GPNGAGKS.

Belongs to the ABC transporter superfamily.

Its function is as follows. Implicated in the export process of the lantibiotic SrtA. The polypeptide is Lantibiotic transport ATP-binding protein SrtF (srtF) (Streptococcus pyogenes serotype M1).